The primary structure comprises 666 residues: E3 ubiquitin-protein ligase MBR2 (666 aa).

Composition is skewed to polar residues over residues 1–14 (MQGP…STGI), 23–35 (CSTN…NNIL), 42–58 (FPNN…ASSS), and 73–88 (SSSR…SNGS). Disordered stretches follow at residues 1-58 (MQGP…ASSS), 73-95 (SSSR…RQLL), 155-179 (SLGS…GLGS), 221-329 (SSLS…DGQP), 400-433 (NPST…TPHN), and 457-491 (GASL…RQRR). A compositionally biased stretch (low complexity) spans 221 to 239 (SSLSLSMPSQNSPNVNNQS). Polar residues-rich tracts occupy residues 258 to 268 (AFPSTRSTETI), 286 to 303 (FSFT…QLPA), and 414 to 433 (GSSS…TPHN). The segment at 619–660 (CCVCQEEYAEGDDLGTLGCGHEFHTACVKQWLMLKNLCPICK) adopts an RING-type; atypical zinc-finger fold.

It belongs to the RING-type zinc finger family. Interacts with MED25 and UBC11.

It carries out the reaction S-ubiquitinyl-[E2 ubiquitin-conjugating enzyme]-L-cysteine + [acceptor protein]-L-lysine = [E2 ubiquitin-conjugating enzyme]-L-cysteine + N(6)-ubiquitinyl-[acceptor protein]-L-lysine.. Its pathway is protein modification; protein ubiquitination. In terms of biological role, E3 ubiquitin-protein ligase that functions as a regulator of MED25 stability by targeting MED25 for degradation in a RING-H2-dependent way. Proteasome-dependent degradation of MED25 seems to activate its function as positive regulator of FLOWERING LOCUS T (FT) and is important to induce the expression of FT and consequently to promote flowering. May function downstream of HAL3 and be required for HAL3-regulated plant growth. Activation of MBR2 by HAL3 may lead to the degradation of cell cycle suppressors, resulting in enhancement of cell division and plant growth. The protein is E3 ubiquitin-protein ligase MBR2 (MBR2) of Arabidopsis thaliana (Mouse-ear cress).